A 1464-amino-acid chain; its full sequence is Neuropathy target esterase sws (1464 aa).

Residues methionine 1–alanine 34 are Lumenal-facing. The chain crosses the membrane as a helical span at residues valine 35–phenylalanine 55. Residues lysine 56–asparagine 1464 lie on the Cytoplasmic side of the membrane. Residue isoleucine 176–arginine 303 coordinates a nucleoside 3',5'-cyclic phosphate. Disordered stretches follow at residues asparagine 329 to histidine 393 and glutamine 409 to threonine 438. The span at threonine 338–proline 367 shows a compositional bias: low complexity. Residues glutamine 409–asparagine 420 are compositionally biased toward polar residues. Serine 421 is subject to Phosphoserine. Over residues threonine 422–threonine 438 the composition is skewed to low complexity. Residues glutamate 456–arginine 586 and isoleucine 575–arginine 702 each bind a nucleoside 3',5'-cyclic phosphate. Positions leucine 928–arginine 1094 constitute a PNPLA domain. A GXGXXG motif is present at residues glycine 932–glycine 937. The GXSXG signature appears at glycine 959–glycine 963. The active-site Nucleophile is serine 961. Catalysis depends on aspartate 1081, which acts as the Proton acceptor. The short motif at aspartate 1081 to glycine 1083 is the DGA/G element. Serine 1175 is modified (phosphoserine). 2 disordered regions span residues valine 1352–serine 1374 and alanine 1400–asparagine 1464. The span at lysine 1429–valine 1444 shows a compositional bias: basic and acidic residues. Positions methionine 1450–asparagine 1464 are enriched in polar residues.

The protein belongs to the NTE family. Interacts with Pka-C3; interaction inhibits the catalytic function of Pka-C3 and the esterase activity of sws.

Its subcellular location is the endoplasmic reticulum membrane. The enzyme catalyses a 1-acyl-sn-glycero-3-phosphocholine + H2O = sn-glycerol 3-phosphocholine + a fatty acid + H(+). Phospholipase B that deacylates intracellular phosphatidylcholine (PtdCho), generating glycerophosphocholine (GroPtdCho). This deacylation occurs at both sn-2 and sn-1 positions of PtdCho. Its specific chemical modification by certain organophosphorus (OP) compounds leads to distal axonopathy. Plays a role in the signaling mechanism between neurons and glia that regulates glia wrapping during development of the adult brain. Essential for membrane lipid homeostasis and cell survival in both neurons and glia of the adult brain. This Drosophila grimshawi (Hawaiian fruit fly) protein is Neuropathy target esterase sws.